A 224-amino-acid chain; its full sequence is Probable GTP-binding protein EngB (224 aa).

Residues 31 to 205 form the EngB-type G domain; the sequence is IGVEIAFAGR…LSILNDWCHP (175 aa). GTP-binding positions include 39-46, 66-70, 84-87, 151-154, and 184-186; these read GRSNAGKS, GRTQL, DLPG, TKSD, and LSS. Mg(2+) contacts are provided by S46 and T68.

This sequence belongs to the TRAFAC class TrmE-Era-EngA-EngB-Septin-like GTPase superfamily. EngB GTPase family. The cofactor is Mg(2+).

Its function is as follows. Necessary for normal cell division and for the maintenance of normal septation. This chain is Probable GTP-binding protein EngB, found in Shewanella frigidimarina (strain NCIMB 400).